Consider the following 352-residue polypeptide: Phenylalanine--tRNA ligase alpha subunit (352 aa).

Position 258 (Glu-258) interacts with Mg(2+).

It belongs to the class-II aminoacyl-tRNA synthetase family. Phe-tRNA synthetase alpha subunit type 1 subfamily. Tetramer of two alpha and two beta subunits. Requires Mg(2+) as cofactor.

The protein localises to the cytoplasm. It catalyses the reaction tRNA(Phe) + L-phenylalanine + ATP = L-phenylalanyl-tRNA(Phe) + AMP + diphosphate + H(+). This Staphylococcus carnosus (strain TM300) protein is Phenylalanine--tRNA ligase alpha subunit.